Here is a 152-residue protein sequence, read N- to C-terminus: Interleukin-1 family member 10 (152 aa).

This sequence belongs to the IL-1 family. As to quaternary structure, interacts with cargo receptor TMED10; the interaction mediates the translocation from the cytoplasm into the ERGIC (endoplasmic reticulum-Golgi intermediate compartment) and thereby secretion.

Its subcellular location is the cytoplasm. It is found in the endoplasmic reticulum-Golgi intermediate compartment. The protein localises to the secreted. Functionally, cytokine with immunomodulatory activity. Alone, does not induce cytokine production, but reduces IL22 and IL17A production by T-cells in response to heat-killed Candida albicans. Reduces IL36G-induced production of IL8 by peripheral blood mononuclear cells. Increases IL6 production by dendritic cells stimulated by bacterial lipopolysaccharides (LPS). Ligand for IL-36R/IL1RL2. This is Interleukin-1 family member 10 (Il1f10) from Mus musculus (Mouse).